We begin with the raw amino-acid sequence, 619 residues long: Eukaryotic translation initiation factor 2-alpha kinase 1 (619 aa).

The disordered stretch occupies residues Met-1–Glu-40. Over residues Ala-18–Asp-28 the composition is skewed to low complexity. The SIFI-degron signature appears at Leu-85–Leu-104. A Protein kinase domain is found at Phe-167–Phe-580. ATP-binding positions include Leu-173 to Val-181 and Lys-196. Thr-283 carries the post-translational modification Phosphothreonine. One copy of the HRM 1 repeat lies at Ala-408–Met-413. The Proton acceptor role is filled by Asp-440. A phosphothreonine; by autocatalysis mark is found at Thr-483, Thr-485, and Thr-490. The stretch at Arg-549 to Ala-554 is one HRM 2 repeat.

It belongs to the protein kinase superfamily. Ser/Thr protein kinase family. GCN2 subfamily. In terms of assembly, synthesized in an inactive form that binds to the N-terminal domain of CDC37. Has to be associated with a multiprotein complex containing Hsp90, CDC37 and PPP5C for maturation and activation by autophosphorylation. The phosphatase PPP5C modulates this activation. Homodimer; homodimerizes in presence of heme, forming a disulfide-linked inactive homodimer. Interacts with DELE1; binds both to full-length DELE1 and processed form of DELE1 (S-DELE1) in response to stress, leading to activate its protein kinase activity and trigger the integrated stress response (ISR). Activated by autophosphorylation; phosphorylated predominantly on serine and threonine residues, but also on tyrosine residues. Autophosphorylation at Thr-485 is required for kinase activation. The active autophosphorylated form apparently is largely refractory to cellular heme fluctuations. Post-translationally, ubiquitinated and degraded by the SIFI complex once the mitochondrial stress has been resolved, thereby providing stress response silencing. Within the SIFI complex, UBR4 initiates ubiquitin chain that are further elongated or branched by KCMF1. Expressed predominantly in erythroid cells, mature reticulocytes, as well as fetal liver nucleated erythroid cells. At much lower levels, expressed in hepatocytes and bone marrow-derived macrophages (at protein level).

It localises to the cytoplasm. It carries out the reaction L-seryl-[protein] + ATP = O-phospho-L-seryl-[protein] + ADP + H(+). It catalyses the reaction L-threonyl-[protein] + ATP = O-phospho-L-threonyl-[protein] + ADP + H(+). In normal conditions, the protein kinase activity is inhibited; inhibition is relieved by various stress conditions. Inhibited by heme: in presence of heme, forms a disulfide-linked inactive homodimer. Heme depletion relieves inhibition and stimulates kinase activity by autophosphorylation. Inhibited by the heme metabolites biliverdin and bilirubin. Induced by oxidative stress generated by arsenite treatment. Binding of nitric oxide (NO) to the heme iron in the N-terminal heme-binding domain activates the kinase activity, while binding of carbon monoxide (CO) suppresses kinase activity. Protein kinase activity is also activated upon binding to DELE1 in response to various stress, triggering the integrated stress response (ISR): activated by full-length DELE1 in response to iron deficiency, while it is activated by the processed form of DELE1 (S-DELE1) in response to mitochondrial stress. Functionally, metabolic-stress sensing protein kinase that phosphorylates the alpha subunit of eukaryotic translation initiation factor 2 (EIF2S1/eIF-2-alpha) in response to various stress conditions. Key activator of the integrated stress response (ISR) required for adaptation to various stress, such as heme deficiency, oxidative stress, osmotic shock, mitochondrial dysfunction and heat shock. EIF2S1/eIF-2-alpha phosphorylation in response to stress converts EIF2S1/eIF-2-alpha in a global protein synthesis inhibitor, leading to a global attenuation of cap-dependent translation, while concomitantly initiating the preferential translation of ISR-specific mRNAs, such as the transcriptional activator ATF4, and hence allowing ATF4-mediated reprogramming. Acts as a key sensor of heme-deficiency: in normal conditions, binds hemin via a cysteine thiolate and histidine nitrogenous coordination, leading to inhibit the protein kinase activity. This binding occurs with moderate affinity, allowing it to sense the heme concentration within the cell: heme depletion relieves inhibition and stimulates kinase activity, activating the ISR. Thanks to this unique heme-sensing capacity, plays a crucial role to shut off protein synthesis during acute heme-deficient conditions. In red blood cells (RBCs), controls hemoglobin synthesis ensuring a coordinated regulation of the synthesis of its heme and globin moieties. It thereby plays an essential protective role for RBC survival in anemias of iron deficiency. Iron deficiency also triggers activation by full-length DELE1. Also activates the ISR in response to mitochondrial dysfunction: HRI/EIF2AK1 protein kinase activity is activated upon binding to the processed form of DELE1 (S-DELE1), thereby promoting the ATF4-mediated reprogramming. Also acts as an activator of mitophagy in response to mitochondrial damage: catalyzes phosphorylation of eIF-2-alpha (EIF2S1) following activation by S-DELE1, thereby promoting mitochondrial localization of EIF2S1, triggering PRKN-independent mitophagy. This Mus musculus (Mouse) protein is Eukaryotic translation initiation factor 2-alpha kinase 1.